Consider the following 556-residue polypeptide: Glucose-6-phosphate isomerase (556 aa).

Glu-363 acts as the Proton donor in catalysis. Active-site residues include His-394 and Lys-522.

The protein belongs to the GPI family.

It localises to the cytoplasm. The catalysed reaction is alpha-D-glucose 6-phosphate = beta-D-fructose 6-phosphate. It functions in the pathway carbohydrate biosynthesis; gluconeogenesis. Its pathway is carbohydrate degradation; glycolysis; D-glyceraldehyde 3-phosphate and glycerone phosphate from D-glucose: step 2/4. Catalyzes the reversible isomerization of glucose-6-phosphate to fructose-6-phosphate. The chain is Glucose-6-phosphate isomerase from Frankia casuarinae (strain DSM 45818 / CECT 9043 / HFP020203 / CcI3).